The sequence spans 212 residues: Large ribosomal subunit protein uL3 (212 aa).

The disordered stretch occupies residues 127–153 (FRGGPATHGQSDRHRAPGSIGSGTTPG).

Belongs to the universal ribosomal protein uL3 family. As to quaternary structure, part of the 50S ribosomal subunit. Forms a cluster with proteins L14 and L19.

Its function is as follows. One of the primary rRNA binding proteins, it binds directly near the 3'-end of the 23S rRNA, where it nucleates assembly of the 50S subunit. This Herpetosiphon aurantiacus (strain ATCC 23779 / DSM 785 / 114-95) protein is Large ribosomal subunit protein uL3.